The chain runs to 567 residues: uncharacterized protein (567 aa).

Residues 1 to 26 are disordered; it reads MPSEKATTRHLPGAVETLSPRTGRRP. 6 helical membrane-spanning segments follow: residues 57-77, 90-110, 142-162, 173-193, 221-241, and 257-277; these read AILV…TVAF, VSFG…TYWL, VALA…IIYG, LFSM…LTEF, MLVW…TAIF, and VLIL…ILAW. Positions 277–329 constitute an HAMP domain; sequence WLTATPVRVVREALNRVEQGDLSGDLVVFDGTELGELQRGFNRMVEGLRERER. Residues 361–485 form the Guanylate cyclase domain; sequence AVVFVDIVGS…EPVNEAARLC (125 aa).

Belongs to the adenylyl cyclase class-3 family.

It is found in the cell membrane. This is an uncharacterized protein from Mycobacterium bovis (strain ATCC BAA-935 / AF2122/97).